A 340-amino-acid chain; its full sequence is Guanine nucleotide-binding protein G(I)/G(S)/G(T) subunit beta-1 (340 aa).

WD repeat units follow at residues 53–83 (GHLA…IIWD), 95–125 (LRSS…SIYN), 141–170 (GHTG…ALWD), 182–212 (GHTG…KLWD), 224–254 (GHES…RLFD), 268–298 (NIIC…NVWD), and 310–340 (GHDN…KIWN).

It belongs to the WD repeat G protein beta family. G proteins are composed of 3 units, alpha, beta and gamma.

In terms of biological role, guanine nucleotide-binding proteins (G proteins) are involved as a modulator or transducer in various transmembrane signaling systems. The beta and gamma chains are required for the GTPase activity, for replacement of GDP by GTP, and for G protein-effector interaction. This is Guanine nucleotide-binding protein G(I)/G(S)/G(T) subunit beta-1 (gnb1) from Danio rerio (Zebrafish).